Reading from the N-terminus, the 440-residue chain is MSDFSQTVPELVAWARKNDFALTLPTERLAFLLAIATLNGERLDGEMSEGDLVDVFRHVSKTFEQTHETVAQRANNAINDLVKQRLLNRFTSELAEGNAIYRLTPLGISISDYYIRQREFSTLRLSMQLSIVAQELRAAGDAAEEGGDEFHWQRNVFAPLKYSVAEIFDSIDLTQRLMDEQQQGVKRDIAGLLTQDWRAAISSCELLLSETSGTLRELQDTLEAAGDKLQANLLRIQDATLGQEALGFVDKLVFDLQAKLDRIISWGQQAIDLWIGYDRHVHKFIRTAIDMDKNRVFAQRLRQSVQGYLEAPWALTYANAERLLDMRDEELMLLNAEVTGELPPDLEFEEYSELRERLAALIEQELQVYRQEQRPLDLGRVLREYLARYPRQRHFDMARILVDQAVRLGVAEADFNGLQAQWQAINEYGAKVQAHVIDKY.

The segment at 208–236 (LSETSGTLRELQDTLEAAGDKLQANLLRI) is leucine-zipper.

It belongs to the MukF family. Interacts, and probably forms a ternary complex, with MukE and MukB via its C-terminal region. The complex formation is stimulated by calcium or magnesium. It is required for an interaction between MukE and MukB.

The protein resides in the cytoplasm. It is found in the nucleoid. In terms of biological role, involved in chromosome condensation, segregation and cell cycle progression. May participate in facilitating chromosome segregation by condensation DNA from both sides of a centrally located replisome during cell division. Not required for mini-F plasmid partitioning. Probably acts via its interaction with MukB and MukE. Overexpression results in anucleate cells. It has a calcium binding activity. The protein is Chromosome partition protein MukF of Edwardsiella ictaluri (strain 93-146).